The sequence spans 327 residues: Porphobilinogen deaminase (327 aa).

At C251 the chain carries S-(dipyrrolylmethanemethyl)cysteine.

It belongs to the HMBS family. It depends on dipyrromethane as a cofactor.

It catalyses the reaction 4 porphobilinogen + H2O = hydroxymethylbilane + 4 NH4(+). The protein operates within porphyrin-containing compound metabolism; protoporphyrin-IX biosynthesis; coproporphyrinogen-III from 5-aminolevulinate: step 2/4. Catalyzes the tetrapolymerization of the monopyrrole porphobilinogen (PBG) into the hydroxymethylbilane pre-uroporphyrinogen in several discrete steps. The protein is Porphobilinogen deaminase (HEM3) of Saccharomyces cerevisiae (strain ATCC 204508 / S288c) (Baker's yeast).